The following is a 118-amino-acid chain: Small ribosomal subunit protein uS13 (118 aa).

Residues 91–118 (HRRGLPVRGQRTRTNARTRKGPRRPIKK) form a disordered region.

Belongs to the universal ribosomal protein uS13 family. As to quaternary structure, part of the 30S ribosomal subunit. Forms a loose heterodimer with protein S19. Forms two bridges to the 50S subunit in the 70S ribosome.

Located at the top of the head of the 30S subunit, it contacts several helices of the 16S rRNA. In the 70S ribosome it contacts the 23S rRNA (bridge B1a) and protein L5 of the 50S subunit (bridge B1b), connecting the 2 subunits; these bridges are implicated in subunit movement. Contacts the tRNAs in the A and P-sites. This is Small ribosomal subunit protein uS13 from Methylococcus capsulatus (strain ATCC 33009 / NCIMB 11132 / Bath).